Here is a 579-residue protein sequence, read N- to C-terminus: ATP-dependent lipid A-core flippase (579 aa).

Helical transmembrane passes span 24–44 (FLAA…LAEM), 61–81 (LMLP…TFLG), 147–167 (LFVI…TLIF), and 253–273 (LLVA…ALMA). One can recognise an ABC transmembrane type-1 domain in the interval 25-306 (LAAVVGYAIY…LTEVNSTIQK (282 aa)). One can recognise an ABC transporter domain in the interval 338–573 (VRFEGVRFRY…DGAYAALHQL (236 aa)). ATP is bound at residue 372–379 (GRSGSGKS).

It belongs to the ABC transporter superfamily. Lipid exporter (TC 3.A.1.106) family. As to quaternary structure, homodimer.

Its subcellular location is the cell inner membrane. The enzyme catalyses ATP + H2O + lipid A-core oligosaccharideSide 1 = ADP + phosphate + lipid A-core oligosaccharideSide 2.. Involved in lipopolysaccharide (LPS) biosynthesis. Translocates lipid A-core from the inner to the outer leaflet of the inner membrane. Transmembrane domains (TMD) form a pore in the inner membrane and the ATP-binding domain (NBD) is responsible for energy generation. In Chromohalobacter salexigens (strain ATCC BAA-138 / DSM 3043 / CIP 106854 / NCIMB 13768 / 1H11), this protein is ATP-dependent lipid A-core flippase.